A 220-amino-acid polypeptide reads, in one-letter code: Cell division protein SepF (220 aa).

The tract at residues 33 to 82 (GAARGYARRPREDRFEEEGYIDRAGREYDDRPAPREYDEPPIYRGGYDEP) is disordered. Residues 52 to 70 (YIDRAGREYDDRPAPREYD) are compositionally biased toward basic and acidic residues.

Belongs to the SepF family. Homodimer. Interacts with FtsZ.

The protein resides in the cytoplasm. Its function is as follows. Cell division protein that is part of the divisome complex and is recruited early to the Z-ring. Probably stimulates Z-ring formation, perhaps through the cross-linking of FtsZ protofilaments. Its function overlaps with FtsA. This Mycobacterium sp. (strain JLS) protein is Cell division protein SepF.